The sequence spans 736 residues: Catalase-peroxidase (736 aa).

A cross-link (tryptophyl-tyrosyl-methioninium (Trp-Tyr) (with M-250)) is located at residues 96–224 (WHSAGTYRTG…LAAVQMGLIY (129 aa)). The active-site Proton acceptor is H97. The segment at residues 224-250 (YVNPEGPDGNPDPVASGRDVRETFGRM) is a cross-link (tryptophyl-tyrosyl-methioninium (Tyr-Met) (with W-96)). H265 is a binding site for heme b.

This sequence belongs to the peroxidase family. Peroxidase/catalase subfamily. In terms of assembly, homodimer or homotetramer. The cofactor is heme b. In terms of processing, formation of the three residue Trp-Tyr-Met cross-link is important for the catalase, but not the peroxidase activity of the enzyme.

It carries out the reaction H2O2 + AH2 = A + 2 H2O. It catalyses the reaction 2 H2O2 = O2 + 2 H2O. Functionally, bifunctional enzyme with both catalase and broad-spectrum peroxidase activity. The sequence is that of Catalase-peroxidase from Pelobacter propionicus (strain DSM 2379 / NBRC 103807 / OttBd1).